The primary structure comprises 335 residues: tRNA methyltransferase 10 homolog A (335 aa).

2 disordered regions span residues methionine 1–arginine 91 and valine 279–glutamine 335. Phosphoserine is present on residues serine 22 and serine 24. The span at arginine 52–lysine 62 shows a compositional bias: basic and acidic residues. Positions arginine 52–serine 84 form a coiled coil. Basic residues predominate over residues glutamate 63–glutamate 75. Positions aspartate 88–valine 279 constitute an SAM-dependent MTase TRM10-type domain. Over residues glutamate 304–glutamine 319 the composition is skewed to basic and acidic residues. The span at glutamine 320–glutamine 335 shows a compositional bias: low complexity. Position 331 is a phosphoserine (serine 331).

The protein belongs to the class IV-like SAM-binding methyltransferase superfamily. TRM10 family. In terms of assembly, interacts with tRNA. In terms of tissue distribution, ubiquitously expressed. Is more abundant in brain and pancreatic islets compared to other tissues (at protein level).

It localises to the nucleus. The protein resides in the nucleolus. It carries out the reaction guanosine(9) in tRNA + S-adenosyl-L-methionine = N(1)-methylguanosine(9) in tRNA + S-adenosyl-L-homocysteine + H(+). Functionally, S-adenosyl-L-methionine-dependent guanine N(1)-methyltransferase that catalyzes the formation of N(1)-methylguanine at position 9 (m1G9) in tRNAs. Probably not able to catalyze formation of N(1)-methyladenine at position 9 (m1A9) in tRNAs. The protein is tRNA methyltransferase 10 homolog A (Trmt10a) of Rattus norvegicus (Rat).